The sequence spans 355 residues: Blue-sensitive opsin (355 aa).

Topologically, residues 1–36 (MNGTEGINFYVPLSNKTGLVRSPFEYPQYYLAEPWK) are extracellular. N-linked (GlcNAc...) asparagine glycosylation is found at N2 and N15. Residues 37-61 (YKVVCCYIFFLIFTGLPINILTLLV) form a helical membrane-spanning segment. The Cytoplasmic portion of the chain corresponds to 62 to 73 (TFKHKKLRQPLN). The chain crosses the membrane as a helical span at residues 74–98 (YILVNLAVADLFMACFGFTVTFYTA). Residues 99–113 (WNGYFIFGPIGCAIE) lie on the Extracellular side of the membrane. Cysteines 110 and 187 form a disulfide. A helical membrane pass occupies residues 114 to 133 (GFFATLGGQVALWSLVVLAI). Residues 134–152 (ERYIVVCKPMGNFRFSATH) lie on the Cytoplasmic side of the membrane. The helical transmembrane segment at 153–176 (ALMGISFTWFMSFSCAAPPLLGWS) threads the bilayer. Over 177–202 (RYIPEGMQCSCGPDYYTLNPDYHNES) the chain is Extracellular. N-linked (GlcNAc...) asparagine glycosylation occurs at N200. The chain crosses the membrane as a helical span at residues 203–230 (YVLYMFGVHFVIPVVVIFFSYGRLICKV). Residues 231–252 (REAAAQQQESASTQKAEREVTR) are Cytoplasmic-facing. A helical transmembrane segment spans residues 253 to 276 (MVILMVLGFLLAWTPYAMVAFWIF). The Extracellular portion of the chain corresponds to 277–284 (TNKGVDFS). Residues 285-309 (ATLMSVPAFFSKSSSLYNPIIYVLM) traverse the membrane as a helical segment. Residue K296 is modified to N6-(retinylidene)lysine. At 310–355 (NKQFRNCMITTICCGKNPFGDEDVSSSVSQSKTEVSSVSSSQVSPA) the chain is on the cytoplasmic side. Residues C322 and C323 are each lipidated (S-palmitoyl cysteine). Residues 332 to 355 (DVSSSVSQSKTEVSSVSSSQVSPA) are disordered. Residues 334 to 355 (SSSVSQSKTEVSSVSSSQVSPA) are compositionally biased toward low complexity.

The protein belongs to the G-protein coupled receptor 1 family. Opsin subfamily. Phosphorylated on some or all of the serine and threonine residues present in the C-terminal region.

It is found in the membrane. Functionally, visual pigments are the light-absorbing molecules that mediate vision. They consist of an apoprotein, opsin, covalently linked to cis-retinal. This opsin uses a vitamin A2 chromophore. This chain is Blue-sensitive opsin, found in Anolis carolinensis (Green anole).